A 448-amino-acid polypeptide reads, in one-letter code: Phosphoglucosamine mutase (448 aa).

Serine 100 functions as the Phosphoserine intermediate in the catalytic mechanism. Mg(2+)-binding residues include serine 100, aspartate 240, aspartate 242, and aspartate 244. Serine 100 is subject to Phosphoserine.

The protein belongs to the phosphohexose mutase family. Mg(2+) is required as a cofactor. Post-translationally, activated by phosphorylation.

It catalyses the reaction alpha-D-glucosamine 1-phosphate = D-glucosamine 6-phosphate. In terms of biological role, catalyzes the conversion of glucosamine-6-phosphate to glucosamine-1-phosphate. The chain is Phosphoglucosamine mutase from Clostridium perfringens (strain SM101 / Type A).